Reading from the N-terminus, the 363-residue chain is MSFEKFFNTAVSAWMSQEGPDSDIVLSSRIRLARNIVDFRFPTLFSSEEAMQIVALFERTFAHRSYGGAGRFELLKMSELQPIEKRVLVEKHLISPHLAEDSPFGACLLSENEEISIMINEEDHIRIQCLFPGLQLAEALEAASELDDWIEGYVNYAFDERLGYLTSCPTNVGTGLRASVMMHLPALVLTQQINRIIPAINQLGLVVRGTYGEGSEALGNIFQISNQITLGKSEEDIVADLHTIVQQLIAQERAARQALVKTLGIQLEDKVFRSYGILANCRVIESKEAAQCLSDVRLGIDLGYIKNISRNILNELMILTQPGFLQQYAGGALRPEERDVRRAALIRERLKMEERRKMEGDER.

Positions 24–255 (IVLSSRIRLA…QQLIAQERAA (232 aa)) constitute a Phosphagen kinase C-terminal domain. ATP is bound by residues 27-31 (SSRIR), His-92, Arg-126, 177-181 (RASVM), and 208-213 (RGTYGE). Positions 338-343 (RDVRRA) match the RDXXRA motif of the pArg binding pocket involved in allosteric regulation motif.

The protein belongs to the ATP:guanido phosphotransferase family.

It carries out the reaction L-arginyl-[protein] + ATP = N(omega)-phospho-L-arginyl-[protein] + ADP + H(+). Appears to be allosterically activated by the binding of pArg-containing polypeptides to the pArg-binding pocket localized in the C-terminal domain of McsB. In terms of biological role, catalyzes the specific phosphorylation of arginine residues in a large number of proteins. Is part of the bacterial stress response system. Protein arginine phosphorylation has a physiologically important role and is involved in the regulation of many critical cellular processes, such as protein homeostasis, motility, competence, and stringent and stress responses, by regulating gene expression and protein activity. This Geobacillus kaustophilus (strain HTA426) protein is Protein-arginine kinase.